The following is a 251-amino-acid chain: MSLAKRIIPCLDINGGRVVKGVNFIGLQDAGDPVEIARRYNDEGADEIVLLDITASYEQRGIMIEVVKNIAKEVFIPFSVGGGIRSLEDMSALLNAGCDKISINSAAIRNPQLIDESAKRFGSQCIVVAVDVKKVSQNSWNVYINGGRVDSGKDMLEWINEACARGAGEILLTSIDTDGTKGGYDKAMIEAVKSINVPIIASGGAGSMEDFADVFVHGADAALAASVFHYKEIEIKMLKTYLQDKGVPVRI.

Active-site residues include D12 and D131.

It belongs to the HisA/HisF family. In terms of assembly, heterodimer of HisH and HisF.

The protein localises to the cytoplasm. The catalysed reaction is 5-[(5-phospho-1-deoxy-D-ribulos-1-ylimino)methylamino]-1-(5-phospho-beta-D-ribosyl)imidazole-4-carboxamide + L-glutamine = D-erythro-1-(imidazol-4-yl)glycerol 3-phosphate + 5-amino-1-(5-phospho-beta-D-ribosyl)imidazole-4-carboxamide + L-glutamate + H(+). The protein operates within amino-acid biosynthesis; L-histidine biosynthesis; L-histidine from 5-phospho-alpha-D-ribose 1-diphosphate: step 5/9. IGPS catalyzes the conversion of PRFAR and glutamine to IGP, AICAR and glutamate. The HisF subunit catalyzes the cyclization activity that produces IGP and AICAR from PRFAR using the ammonia provided by the HisH subunit. The polypeptide is Imidazole glycerol phosphate synthase subunit HisF (Helicobacter hepaticus (strain ATCC 51449 / 3B1)).